The chain runs to 254 residues: MVPWLDPNDPFPPVERALGPATGAPGLLAASADLLPSRLIDAYLRGIFPWYSDGQPVLWWSPDPRMILAPAEFKVSPSLRKTLKRVLRDAAWEVRVDHDFAGVMRACAQAPRRGQRGTWITAEIIDAYTSLHRSGNAHSIETWHDGRRVGGLYGVAFGRMFFGESMYADATDASKIALATLVAHLRDQGLEMIDCQQNTSHLASLGGREIARKAFVAHVRRAAAEPPIPWQFDKRALAALTGPAGAAAPRGIER.

Belongs to the L/F-transferase family.

Its subcellular location is the cytoplasm. It catalyses the reaction N-terminal L-lysyl-[protein] + L-leucyl-tRNA(Leu) = N-terminal L-leucyl-L-lysyl-[protein] + tRNA(Leu) + H(+). The catalysed reaction is N-terminal L-arginyl-[protein] + L-leucyl-tRNA(Leu) = N-terminal L-leucyl-L-arginyl-[protein] + tRNA(Leu) + H(+). It carries out the reaction L-phenylalanyl-tRNA(Phe) + an N-terminal L-alpha-aminoacyl-[protein] = an N-terminal L-phenylalanyl-L-alpha-aminoacyl-[protein] + tRNA(Phe). Functions in the N-end rule pathway of protein degradation where it conjugates Leu, Phe and, less efficiently, Met from aminoacyl-tRNAs to the N-termini of proteins containing an N-terminal arginine or lysine. This Burkholderia vietnamiensis (strain G4 / LMG 22486) (Burkholderia cepacia (strain R1808)) protein is Leucyl/phenylalanyl-tRNA--protein transferase.